The sequence spans 871 residues: DNA mismatch repair protein MutS (871 aa).

625–632 (GPNMAGKS) contributes to the ATP binding site.

The protein belongs to the DNA mismatch repair MutS family.

Its function is as follows. This protein is involved in the repair of mismatches in DNA. It is possible that it carries out the mismatch recognition step. This protein has a weak ATPase activity. This chain is DNA mismatch repair protein MutS, found in Chlorobium limicola (strain DSM 245 / NBRC 103803 / 6330).